The primary structure comprises 55 residues: Large ribosomal subunit protein bL33 (55 aa).

The protein belongs to the bacterial ribosomal protein bL33 family.

This chain is Large ribosomal subunit protein bL33, found in Rhizorhabdus wittichii (strain DSM 6014 / CCUG 31198 / JCM 15750 / NBRC 105917 / EY 4224 / RW1) (Sphingomonas wittichii).